The primary structure comprises 139 residues: Cell division protein SepF (139 aa).

It belongs to the SepF family. As to quaternary structure, homodimer. Interacts with FtsZ.

The protein resides in the cytoplasm. In terms of biological role, cell division protein that is part of the divisome complex and is recruited early to the Z-ring. Probably stimulates Z-ring formation, perhaps through the cross-linking of FtsZ protofilaments. Its function overlaps with FtsA. This chain is Cell division protein SepF, found in Coprothermobacter proteolyticus (strain ATCC 35245 / DSM 5265 / OCM 4 / BT).